Consider the following 479-residue polypeptide: Muscarinic acetylcholine receptor M4 (479 aa).

Topologically, residues 1–31 are extracellular; that stretch reads MANFTPVNGSSGNQSVRLVTSSSHNRYETVE. N-linked (GlcNAc...) asparagine glycosylation is found at asparagine 8 and asparagine 13. The chain crosses the membrane as a helical span at residues 32–54; sequence MVFIATVTGSLSLVTVVGNILVM. The Cytoplasmic segment spans residues 55–68; the sequence is LSIKVNRQLQTVNN. Residues 69 to 89 form a helical membrane-spanning segment; it reads YFLFSLACADLIIGAFSMNLY. Residues 90 to 106 lie on the Extracellular side of the membrane; that stretch reads TVYIIKGYWPLGAVVCD. Residues cysteine 105 and cysteine 185 are joined by a disulfide bond. A helical transmembrane segment spans residues 107-128; sequence LWLALDYVVSNASVMNLLIISF. Residues 129 to 148 are Cytoplasmic-facing; the sequence is DRYFCVTKPLTYPARRTTKM. Residues 149-171 traverse the membrane as a helical segment; that stretch reads AGLMIAAAWVLSFVLWAPAILFW. Over 172 to 193 the chain is Extracellular; sequence QFVVGKRTVPDNQCFIQFLSNP. Residues 194–216 traverse the membrane as a helical segment; the sequence is AVTFGTAIAAFYLPVVIMTVLYI. Residues 217 to 401 are Cytoplasmic-facing; it reads HISLASRSRV…AARERKVTRT (185 aa). Positions 271–333 are disordered; the sequence is KLEEAPPPAL…PAPPLQPRAL (63 aa). The segment covering 275 to 286 has biased composition (pro residues); that stretch reads APPPALPPPPRP. Residues 294–304 show a composition bias toward polar residues; the sequence is NESSSGSATQN. The chain crosses the membrane as a helical span at residues 402-422; the sequence is IFAILLAFILTWTPYNVMVLV. The Extracellular segment spans residues 423–436; it reads NTFCQSCIPDTVWS. The chain crosses the membrane as a helical span at residues 437–456; it reads IGYWLCYVNSTINPACYALC. Over 457 to 479 the chain is Cytoplasmic; it reads NATFKKTFRHLLLCQYRNIGTAR. A phosphothreonine mark is found at threonine 459, threonine 463, and threonine 477.

The protein belongs to the G-protein coupled receptor 1 family. Muscarinic acetylcholine receptor subfamily. CHRM4 sub-subfamily.

It is found in the cell membrane. It localises to the postsynaptic cell membrane. Its function is as follows. The muscarinic acetylcholine receptor mediates various cellular responses, including inhibition of adenylate cyclase, breakdown of phosphoinositides and modulation of potassium channels through the action of G proteins. Primary transducing effect is inhibition of adenylate cyclase. The chain is Muscarinic acetylcholine receptor M4 (CHRM4) from Homo sapiens (Human).